The primary structure comprises 132 residues: Fatty acid-binding protein, intestinal (132 aa).

Residue alanine 2 is modified to N-acetylalanine. Residues tryptophan 83 and arginine 107 each coordinate hexadecanoate. 2 residues coordinate tetradecanoate: tryptophan 83 and arginine 107.

The protein belongs to the calycin superfamily. Fatty-acid binding protein (FABP) family. Expressed in the small intestine. Expression in the mucosal cells of the ileum extends from the midvillar region to the villus tips.

The protein localises to the cytoplasm. Functionally, FABPs are thought to play a role in the intracellular transport of long-chain fatty acids and their acyl-CoA esters. FABP2 is probably involved in triglyceride-rich lipoprotein synthesis. Binds saturated long-chain fatty acids with a high affinity, but binds with a lower affinity to unsaturated long-chain fatty acids. FABP2 may also help maintain energy homeostasis by functioning as a lipid sensor. The chain is Fatty acid-binding protein, intestinal (Fabp2) from Rattus norvegicus (Rat).